The primary structure comprises 394 residues: Elongation factor Tu (394 aa).

The tr-type G domain occupies 10–204 (KPHINIGTIG…AVDDNIPTPE (195 aa)). Positions 19–26 (GHVDHGKT) are G1. Position 19 to 26 (19 to 26 (GHVDHGKT)) interacts with GTP. Thr26 lines the Mg(2+) pocket. Positions 60 to 64 (GITIN) are G2. The interval 81-84 (DCPG) is G3. GTP-binding positions include 81–85 (DCPGH) and 136–139 (NKID). Residues 136-139 (NKID) form a G4 region. The segment at 174–176 (SAL) is G5.

The protein belongs to the TRAFAC class translation factor GTPase superfamily. Classic translation factor GTPase family. EF-Tu/EF-1A subfamily. In terms of assembly, monomer.

The protein localises to the cytoplasm. It catalyses the reaction GTP + H2O = GDP + phosphate + H(+). GTP hydrolase that promotes the GTP-dependent binding of aminoacyl-tRNA to the A-site of ribosomes during protein biosynthesis. The sequence is that of Elongation factor Tu from Chlamydia abortus (strain DSM 27085 / S26/3) (Chlamydophila abortus).